A 141-amino-acid chain; its full sequence is MEMLQGLLLWLLLSVAGVWASRGPLRPLCRPINATLAAENEACPVCITFTTSICAGYCPSMVRVLPAALPPVPQPVCTYRELSFASIRLPGCPPGVDPTVSFPVALSCHCGPCRLSSSDCGGPRAQPLACDRPLLPGLLFL.

The first 20 residues, 1–20, serve as a signal peptide directing secretion; that stretch reads MEMLQGLLLWLLLSVAGVWA. The residue at position 21 (serine 21) is a Blocked amino end (Ser). Cystine bridges form between cysteine 29–cysteine 77, cysteine 43–cysteine 92, cysteine 46–cysteine 130, cysteine 54–cysteine 108, cysteine 58–cysteine 110, and cysteine 113–cysteine 120. An N-linked (GlcNAc...) asparagine glycan is attached at asparagine 33.

The protein belongs to the glycoprotein hormones subunit beta family. Heterodimer of a common alpha chain and a unique beta chain which confers biological specificity to thyrotropin, lutropin, follitropin and gonadotropin.

The protein resides in the secreted. Functionally, promotes spermatogenesis and ovulation by stimulating the testes and ovaries to synthesize steroids. The polypeptide is Lutropin subunit beta (LHB) (Sus scrofa (Pig)).